Reading from the N-terminus, the 224-residue chain is Cytidylate kinase (224 aa).

11–19 provides a ligand contact to ATP; it reads GPAAAGKST.

It belongs to the cytidylate kinase family. Type 1 subfamily.

Its subcellular location is the cytoplasm. It carries out the reaction CMP + ATP = CDP + ADP. It catalyses the reaction dCMP + ATP = dCDP + ADP. The sequence is that of Cytidylate kinase from Listeria monocytogenes serotype 4a (strain HCC23).